The following is a 203-amino-acid chain: Vexin (203 aa).

Basic and acidic residues predominate over residues 59 to 70 (HRTDRRDGEGRW). The disordered stretch occupies residues 59–101 (HRTDRRDGEGRWSGRFQNPRLQGPHPAKTPARPVGTSEPKSAN).

Belongs to the vexin family.

It localises to the cell membrane. It is found in the nucleus. Functionally, required for neurogenesis in the neural plate and retina. Strongly cooperates with neural bHLH factors to promote neurogenesis. The polypeptide is Vexin (Bos taurus (Bovine)).